The following is a 176-amino-acid chain: MKFLFDLFPIILFFAAFKLWGIFTATAVAIAATLAQVAWVAFRHRKVDTMLWVSLGVIVVFGGATLVLHDEKFIQWKPTVLYWLFAVGLVAARYAFGKNLIEKMMGKQLTLPEPVWDKLNLAWAAFFAALGVTNLYVVRNFTESQWVNFKLFGTTGAIIVFVILQSLWLAKYLKGE.

A run of 5 helical transmembrane segments spans residues 3–23 (FLFD…WGIF), 49–69 (TMLW…LVLH), 72–92 (KFIQ…LVAA), 118–138 (KLNL…LYVV), and 149–169 (FKLF…SLWL).

This sequence belongs to the YciB family.

It is found in the cell inner membrane. Plays a role in cell envelope biogenesis, maintenance of cell envelope integrity and membrane homeostasis. In Burkholderia thailandensis (strain ATCC 700388 / DSM 13276 / CCUG 48851 / CIP 106301 / E264), this protein is Inner membrane-spanning protein YciB.